The following is a 310-amino-acid chain: L-lactate dehydrogenase (310 aa).

NAD(+)-binding positions include 10–11 (MV), Asp-32, Tyr-62, and 76–77 (GV). Residues Gln-79, Arg-85, and 117–120 (NPVD) each bind substrate. NAD(+) is bound by residues 115 to 117 (ATN) and Ser-140. 145–148 (DTAR) lines the substrate pocket. Residues Arg-150 and 162–167 (QSVHAY) contribute to the beta-D-fructose 1,6-bisphosphate site. The active-site Proton acceptor is the His-172. Tyr-218 bears the Phosphotyrosine mark. A substrate-binding site is contributed by Thr-227.

The protein belongs to the LDH/MDH superfamily. LDH family. Homotetramer.

The protein localises to the cytoplasm. The enzyme catalyses (S)-lactate + NAD(+) = pyruvate + NADH + H(+). The protein operates within fermentation; pyruvate fermentation to lactate; (S)-lactate from pyruvate: step 1/1. Its activity is regulated as follows. Allosterically activated by fructose 1,6-bisphosphate (FBP). It binds two fructose 1,6-bisphosphate (FBP) molecules per tetramer. Its function is as follows. Catalyzes the conversion of lactate to pyruvate. This Thermus caldophilus protein is L-lactate dehydrogenase.